A 716-amino-acid chain; its full sequence is Fatty acid oxidation complex subunit alpha (716 aa).

Residues 1 to 189 are enoyl-CoA hydratase/isomerase; it reads MIYQSPTIQV…KVGAVDSVVA (189 aa). Asp296 is a binding site for substrate. The segment at 311–716 is 3-hydroxyacyl-CoA dehydrogenase; that stretch reads KEVNNAAVLG…AANNGSYYQA (406 aa). NAD(+) is bound by residues Met324, Asp343, 400 to 402, Lys407, and Ser429; that span reads VVE. Residue His450 is the For 3-hydroxyacyl-CoA dehydrogenase activity of the active site. Asn453 contributes to the NAD(+) binding site. Residues Asn500 and Tyr660 each coordinate substrate.

This sequence in the N-terminal section; belongs to the enoyl-CoA hydratase/isomerase family. In the C-terminal section; belongs to the 3-hydroxyacyl-CoA dehydrogenase family. Heterotetramer of two alpha chains (FadB) and two beta chains (FadA).

It carries out the reaction a (3S)-3-hydroxyacyl-CoA + NAD(+) = a 3-oxoacyl-CoA + NADH + H(+). The enzyme catalyses a (3S)-3-hydroxyacyl-CoA = a (2E)-enoyl-CoA + H2O. The catalysed reaction is a 4-saturated-(3S)-3-hydroxyacyl-CoA = a (3E)-enoyl-CoA + H2O. It catalyses the reaction (3S)-3-hydroxybutanoyl-CoA = (3R)-3-hydroxybutanoyl-CoA. It carries out the reaction a (3Z)-enoyl-CoA = a 4-saturated (2E)-enoyl-CoA. The enzyme catalyses a (3E)-enoyl-CoA = a 4-saturated (2E)-enoyl-CoA. Its pathway is lipid metabolism; fatty acid beta-oxidation. Involved in the aerobic and anaerobic degradation of long-chain fatty acids via beta-oxidation cycle. Catalyzes the formation of 3-oxoacyl-CoA from enoyl-CoA via L-3-hydroxyacyl-CoA. It can also use D-3-hydroxyacyl-CoA and cis-3-enoyl-CoA as substrate. In Shewanella baltica (strain OS185), this protein is Fatty acid oxidation complex subunit alpha.